A 157-amino-acid chain; its full sequence is Transcriptional repressor NrdR (157 aa).

Residues 1 to 22 (MRCPKCGATKSSVIDSRQAEEG) form a disordered region. The segment at 3-34 (CPKCGATKSSVIDSRQAEEGNTIRRRRECDEC) is a zinc-finger region. The ATP-cone domain maps to 49–139 (LVVVKKDGTR…VYRSFKDVSE (91 aa)).

This sequence belongs to the NrdR family. Zn(2+) serves as cofactor.

In terms of biological role, negatively regulates transcription of bacterial ribonucleotide reductase nrd genes and operons by binding to NrdR-boxes. The sequence is that of Transcriptional repressor NrdR from Streptococcus pneumoniae (strain Hungary19A-6).